Reading from the N-terminus, the 335-residue chain is Anthranilate phosphoribosyltransferase (335 aa).

5-phospho-alpha-D-ribose 1-diphosphate-binding positions include G79, 82–83, T87, 89–92, 107–115, and A119; these read GD, NIST, and KHGNRSASS. G79 provides a ligand contact to anthranilate. S91 lines the Mg(2+) pocket. N110 contributes to the anthranilate binding site. R165 lines the anthranilate pocket. Mg(2+)-binding residues include D224 and E225.

The protein belongs to the anthranilate phosphoribosyltransferase family. In terms of assembly, homodimer. It depends on Mg(2+) as a cofactor.

The enzyme catalyses N-(5-phospho-beta-D-ribosyl)anthranilate + diphosphate = 5-phospho-alpha-D-ribose 1-diphosphate + anthranilate. The protein operates within amino-acid biosynthesis; L-tryptophan biosynthesis; L-tryptophan from chorismate: step 2/5. Functionally, catalyzes the transfer of the phosphoribosyl group of 5-phosphorylribose-1-pyrophosphate (PRPP) to anthranilate to yield N-(5'-phosphoribosyl)-anthranilate (PRA). The polypeptide is Anthranilate phosphoribosyltransferase (Methanobrevibacter smithii (strain ATCC 35061 / DSM 861 / OCM 144 / PS)).